The sequence spans 111 residues: Small ribosomal subunit protein bS16 (111 aa).

The protein belongs to the bacterial ribosomal protein bS16 family.

The protein is Small ribosomal subunit protein bS16 of Rickettsia canadensis (strain McKiel).